The sequence spans 814 residues: Valine--tRNA ligase (814 aa).

Residues 46-56 (PTVSGQLHIGH) carry the 'HIGH' region motif. Positions 536–540 (KMSKS) match the 'KMSKS' region motif. Residue Lys-539 participates in ATP binding.

This sequence belongs to the class-I aminoacyl-tRNA synthetase family. ValS type 2 subfamily. In terms of assembly, monomer.

It is found in the cytoplasm. It carries out the reaction tRNA(Val) + L-valine + ATP = L-valyl-tRNA(Val) + AMP + diphosphate. Its function is as follows. Catalyzes the attachment of valine to tRNA(Val). As ValRS can inadvertently accommodate and process structurally similar amino acids such as threonine, to avoid such errors, it has a 'posttransfer' editing activity that hydrolyzes mischarged Thr-tRNA(Val) in a tRNA-dependent manner. The polypeptide is Valine--tRNA ligase (Rickettsia prowazekii (strain Madrid E)).